Consider the following 355-residue polypeptide: uncharacterized protein (355 aa).

132 to 139 is an ATP binding site; that stretch reads GPPGCGKT.

It belongs to the AAA ATPase family.

It localises to the mitochondrion. This is an uncharacterized protein from Schizosaccharomyces pombe (strain 972 / ATCC 24843) (Fission yeast).